The chain runs to 350 residues: Anthranilate phosphoribosyltransferase (350 aa).

5-phospho-alpha-D-ribose 1-diphosphate is bound by residues G93, 96 to 97, T101, 103 to 106, 121 to 129, and S133; these read GD, NIST, and KHGNRSASG. Residue G93 participates in anthranilate binding. Residue S105 participates in Mg(2+) binding. N124 is an anthranilate binding site. R179 contributes to the anthranilate binding site. Residues D238 and E239 each contribute to the Mg(2+) site.

The protein belongs to the anthranilate phosphoribosyltransferase family. In terms of assembly, homodimer. Mg(2+) is required as a cofactor.

The enzyme catalyses N-(5-phospho-beta-D-ribosyl)anthranilate + diphosphate = 5-phospho-alpha-D-ribose 1-diphosphate + anthranilate. It participates in amino-acid biosynthesis; L-tryptophan biosynthesis; L-tryptophan from chorismate: step 2/5. Catalyzes the transfer of the phosphoribosyl group of 5-phosphorylribose-1-pyrophosphate (PRPP) to anthranilate to yield N-(5'-phosphoribosyl)-anthranilate (PRA). The chain is Anthranilate phosphoribosyltransferase from Parasynechococcus marenigrum (strain WH8102).